A 386-amino-acid polypeptide reads, in one-letter code: Outer membrane protein assembly factor BamB (386 aa).

The N-terminal stretch at 1 to 25 is a signal peptide; it reads MMRNSRPGRAWRGAVVLTGLLALSG. C26 carries the N-palmitoyl cysteine lipid modification. Residue C26 is the site of S-diacylglycerol cysteine attachment.

Belongs to the BamB family. As to quaternary structure, part of the Bam complex.

The protein resides in the cell outer membrane. Part of the outer membrane protein assembly complex, which is involved in assembly and insertion of beta-barrel proteins into the outer membrane. The sequence is that of Outer membrane protein assembly factor BamB from Bordetella pertussis (strain Tohama I / ATCC BAA-589 / NCTC 13251).